The primary structure comprises 484 residues: Glycogen synthase (484 aa).

Lysine 15 is a binding site for ADP-alpha-D-glucose.

Belongs to the glycosyltransferase 1 family. Bacterial/plant glycogen synthase subfamily.

The enzyme catalyses [(1-&gt;4)-alpha-D-glucosyl](n) + ADP-alpha-D-glucose = [(1-&gt;4)-alpha-D-glucosyl](n+1) + ADP + H(+). It functions in the pathway glycan biosynthesis; glycogen biosynthesis. Its function is as follows. Synthesizes alpha-1,4-glucan chains using ADP-glucose. In Koribacter versatilis (strain Ellin345), this protein is Glycogen synthase.